Here is a 565-residue protein sequence, read N- to C-terminus: Berberine bridge enzyme-like C-2 (565 aa).

The first 17 residues, 1-17 (MFPIIILISFSFTFLFA), serve as a signal peptide directing secretion. N-linked (GlcNAc...) asparagine glycans are attached at residues Asn-28 and Asn-40. Cysteines 32 and 94 form a disulfide. Residues 72-248 (YMPKPTVIIL…YAWKIRLLKV (177 aa)) enclose the FAD-binding PCMH-type domain. The residue at position 109 (His-109) is a Pros-8alpha-FAD histidine. N-linked (GlcNAc...) asparagine glycosylation is found at Asn-363 and Asn-502.

Belongs to the oxygen-dependent FAD-linked oxidoreductase family. FAD serves as cofactor.

The protein resides in the vacuole. It functions in the pathway alkaloid biosynthesis; nicotine biosynthesis. In terms of biological role, involved in the biosynthesis of pyridine alkaloid natural products, leading mainly to the production of anabasine, anatabine, nicotine and nornicotine, effective deterrents against herbivores with antiparasitic and pesticide properties (neurotoxins); nornicotine serves as the precursor in the synthesis of the carcinogen compound N'-nitrosonornicotine (NNN). Catalyzes a late oxidation step subsequent to the pyridine ring condensation reaction in the biosynthesis of alkaloids. The protein is Berberine bridge enzyme-like C-2 of Nicotiana tabacum (Common tobacco).